A 750-amino-acid polypeptide reads, in one-letter code: MALPFLPGNSFNRNIGKERFHKSQHWGFCNNVRMLVSENKPGVGGDLLYGQKIKPKHSVFPKGDGTDAPSWVAFDKQVLSFDAYLEDEISDKRQEIFRIRYYKIYFYLEDDTIQVNEPEVINSGLPQGTSIRRQRIPYPPPNDDQFYTVYDFNINISVVFYGRTFKIYDCDPFTKNFLKKIGIKLNPPGQCPLDPYMKMRRETLEFVDPFRPYQSFDTLKRFIQYDGKVLRFFCLWDDSTSLFGDRREFVLHYFLCDGTVEIREVLPSNSGRDAMSSFLRRGKLPKYGPPGIYQPGQITDRAVLNVYGGLSEWRADGYLLDKYQLGKVEQDFYTDQDLSIGATINVWGRKVLLCDCDEFTKTYYRTKYGVDNFTPISCKPPHLPKIERKYPPYTGFGSEEDSFRSCVGLKPTPHRKNFKKFMELDSFGNISNILRYFGKLITHKCADVDRIFVIAFYLSDDTISVFEPIENNSGNAGGMFLKRSRVKKPGQEVFKSEFSEYIKAEELYIGATVNINGYLFILLNADEYTLNYMENNTDKFPYSNFELAIQKLKQEKSKSREITQVFAAADYNHTKVVPYNTFRDILMSITMGKLIDQELITIARHYRVPEIMDPDLAYLIARAHEKFKKNIFENFDMFIYNCVYEDREKKGVLPTKDIRRMCKSSRLPLDDDFLDCLLSRFEDKDHQINYEIFFSVLNWRMNPTPDLQAPPYLKEKCEDVWVGMPSPIPVKYVRYLDFLIDVYGLEDNML.

DM10 domains lie at 75–182 (DKQV…KKIG), 226–368 (DGKV…RTKY), and 430–537 (ISNI…ENNT). The EF-hand domain maps to 557-592 (SKSREITQVFAAADYNHTKVVPYNTFRDILMSITMG).

In terms of assembly, microtubule inner protein component of sperm flagellar doublet microtubules.

The protein resides in the cytoplasm. It is found in the cytoskeleton. It localises to the cilium axoneme. The protein localises to the flagellum axoneme. Its function is as follows. Microtubule inner protein (MIP) part of the dynein-decorated doublet microtubules (DMTs) in cilia axoneme, which is required for motile cilia beating. This chain is EF-hand domain-containing family member C2 (Efhc2), found in Mus musculus (Mouse).